The following is a 533-amino-acid chain: MKYIFVTGGVVSSLGKGITSSSLGRLLKARGLNVNMIKIDPYLQIDAGTMSPFEHGEVFVTDDGGETDLDLGNYERFVDIGLKADNNITTGKIYWSVLSKERKGDYLGKTVQVIPHITNEIKDRIKNLGKESDITIIEIGGTVGDIESLPFLEAIRQFKKDVGKENVLYIHVSLLPYIRSAGELKTKPTQHSVKELKGIGIQPDILVCRSEIPISEKIKDKLALFCDVEKEAVIECKDARTIYEVPLNLEKEGLGKLVTEKLNLRDSTPDLTEWRAIVDRIINPMNEITIGIVGKYIELKDSYMSIMEALGHAGAKNDTKVNIAWINSEELETKNYEEILNKMVDDEKLHGILVPGGFGDRGIDGKVNAVRYAREKNIPFLGICLGMQCAVIEFARHVCGLNANSTEFDEETEHPVIDYIPEQREVTEKGGTMRLGAYPAVLTENSLASELYGSINASERHRHRYEVNPEYHEILKKNGLIISGMSPDGKLAEFIELENHKYFIATQAHPEFKSRPNKPHPLFHGLVKASIEK.

The interval 1-264 (MKYIFVTGGV…GKLVTEKLNL (264 aa)) is amidoligase domain. Position 12 (Ser-12) interacts with CTP. Ser-12 is a UTP binding site. ATP contacts are provided by residues 13–18 (SLGKGI) and Asp-70. 2 residues coordinate Mg(2+): Asp-70 and Glu-138. CTP-binding positions include 145-147 (DIE), 185-190 (KTKPTQ), and Lys-221. UTP contacts are provided by residues 185–190 (KTKPTQ) and Lys-221. An ATP-binding site is contributed by 237–239 (KDA). The Glutamine amidotransferase type-1 domain occupies 289–533 (TIGIVGKYIE…HGLVKASIEK (245 aa)). An L-glutamine-binding site is contributed by Gly-357. Cys-384 acts as the Nucleophile; for glutamine hydrolysis in catalysis. L-glutamine is bound by residues 385 to 388 (LGMQ), Glu-407, and Arg-464. Residues His-509 and Glu-511 contribute to the active site.

The protein belongs to the CTP synthase family. In terms of assembly, homotetramer.

It catalyses the reaction UTP + L-glutamine + ATP + H2O = CTP + L-glutamate + ADP + phosphate + 2 H(+). The catalysed reaction is L-glutamine + H2O = L-glutamate + NH4(+). The enzyme catalyses UTP + NH4(+) + ATP = CTP + ADP + phosphate + 2 H(+). Its pathway is pyrimidine metabolism; CTP biosynthesis via de novo pathway; CTP from UDP: step 2/2. Its activity is regulated as follows. Allosterically activated by GTP, when glutamine is the substrate; GTP has no effect on the reaction when ammonia is the substrate. The allosteric effector GTP functions by stabilizing the protein conformation that binds the tetrahedral intermediate(s) formed during glutamine hydrolysis. Inhibited by the product CTP, via allosteric rather than competitive inhibition. Catalyzes the ATP-dependent amination of UTP to CTP with either L-glutamine or ammonia as the source of nitrogen. Regulates intracellular CTP levels through interactions with the four ribonucleotide triphosphates. This is CTP synthase from Methanococcus maripaludis (strain DSM 14266 / JCM 13030 / NBRC 101832 / S2 / LL).